A 123-amino-acid chain; its full sequence is UPF0102 protein APJL_1381 (123 aa).

This sequence belongs to the UPF0102 family.

The chain is UPF0102 protein APJL_1381 from Actinobacillus pleuropneumoniae serotype 3 (strain JL03).